The chain runs to 514 residues: F-box-like/WD repeat-containing protein TBL1XR1 (514 aa).

Ser-2 carries the post-translational modification N-acetylserine. In terms of domain architecture, LisH spans Ser-4–Gln-36. One can recognise an F-box-like domain in the interval Gly-41 to Ala-86. Position 102 is an N6-acetyllysine (Lys-102). Positions Ala-114 to His-139 are disordered. A compositionally biased stretch (low complexity) spans Ala-124–Glu-135. WD repeat units follow at residues Gly-167–Pro-206, Pro-223–Leu-262, Gln-264–Gln-303, Phe-306–Thr-344, Gly-347–Asp-386, Ala-389–Thr-437, Lys-440–Ser-479, and Arg-481–Arg-513. Residue Lys-277 forms a Glycyl lysine isopeptide (Lys-Gly) (interchain with G-Cter in SUMO2) linkage.

This sequence belongs to the WD repeat EBI family. In terms of assembly, component of the N-Cor repressor complex, at least composed of NCOR1, NCOR2, HDAC3, TBL1X, TBL1XR1, CORO2A and GPS2. Probable component of some E3 ubiquitin ligase complex. Interacts with histones H2B and H4. Interacts with MECP2; bridges interaction between MECP2 and NCOR1. Interacts with USP44.

The protein localises to the nucleus. In terms of biological role, F-box-like protein involved in the recruitment of the ubiquitin/19S proteasome complex to nuclear receptor-regulated transcription units. Plays an essential role in transcription activation mediated by nuclear receptors. Probably acts as integral component of the N-Cor corepressor complex that mediates the recruitment of the 19S proteasome complex, leading to the subsequent proteasomal degradation of N-Cor complex, thereby allowing cofactor exchange, and transcription activation. This Mus musculus (Mouse) protein is F-box-like/WD repeat-containing protein TBL1XR1 (Tbl1xr1).